The sequence spans 233 residues: Ribonuclease 3 (233 aa).

The 130-residue stretch at 6 to 135 folds into the RNase III domain; the sequence is QDYLAKEFNI…FIGALYLDQG (130 aa). E48 is a binding site for Mg(2+). Residue D52 is part of the active site. D121 and E124 together coordinate Mg(2+). The active site involves E124. The 70-residue stretch at 161–230 folds into the DRBM domain; it reads DAKTSLQEFL…AQQALDNMRN (70 aa). The disordered stretch occupies residues 205 to 233; that stretch reads IGEGKGSSKKHAEMQAAQQALDNMRNKNK.

The protein belongs to the ribonuclease III family. In terms of assembly, homodimer. Mg(2+) is required as a cofactor.

The protein localises to the cytoplasm. The catalysed reaction is Endonucleolytic cleavage to 5'-phosphomonoester.. Digests double-stranded RNA. Involved in the processing of primary rRNA transcript to yield the immediate precursors to the large and small rRNAs (23S and 16S). Processes some mRNAs, and tRNAs when they are encoded in the rRNA operon. Processes pre-crRNA and tracrRNA of type II CRISPR loci if present in the organism. The sequence is that of Ribonuclease 3 from Limosilactobacillus reuteri (strain DSM 20016) (Lactobacillus reuteri).